A 406-amino-acid polypeptide reads, in one-letter code: Protein translocase subunit SecD (406 aa).

The next 6 helical transmembrane spans lie at 8–28, 240–260, 262–282, 289–309, 334–354, and 361–381; these read IVIL…NPIN, MAAM…YRVA, FVAD…MCAI, PGIA…VIIF, FPAI…LFFF, and GFAV…IFIT.

The protein belongs to the SecD/SecF family. SecD subfamily. Forms a complex with SecF. Part of the essential Sec protein translocation apparatus which comprises SecA, SecYEG and auxiliary proteins SecDF. Other proteins may also be involved.

The protein resides in the cell inner membrane. Its function is as follows. Part of the Sec protein translocase complex. Interacts with the SecYEG preprotein conducting channel. SecDF uses the proton motive force (PMF) to complete protein translocation after the ATP-dependent function of SecA. The chain is Protein translocase subunit SecD from Sebaldella termitidis (strain ATCC 33386 / NCTC 11300).